The chain runs to 306 residues: Bifunctional protein FolD (306 aa).

NADP(+)-binding positions include 166–168 and I232; that span reads GRS.

This sequence belongs to the tetrahydrofolate dehydrogenase/cyclohydrolase family. In terms of assembly, homodimer.

The enzyme catalyses (6R)-5,10-methylene-5,6,7,8-tetrahydrofolate + NADP(+) = (6R)-5,10-methenyltetrahydrofolate + NADPH. It catalyses the reaction (6R)-5,10-methenyltetrahydrofolate + H2O = (6R)-10-formyltetrahydrofolate + H(+). It participates in one-carbon metabolism; tetrahydrofolate interconversion. Catalyzes the oxidation of 5,10-methylenetetrahydrofolate to 5,10-methenyltetrahydrofolate and then the hydrolysis of 5,10-methenyltetrahydrofolate to 10-formyltetrahydrofolate. This chain is Bifunctional protein FolD, found in Methylorubrum extorquens (strain CM4 / NCIMB 13688) (Methylobacterium extorquens).